We begin with the raw amino-acid sequence, 153 residues long: Histone H2B.6 (153 aa).

Basic and acidic residues-rich tracts occupy residues 1-28 (MAPKAEKKPAAKKPAEEEPAAEKAEKAP) and 36-53 (EKRLPAGKGEKGSGEGKK). The tract at residues 1 to 60 (MAPKAEKKPAAKKPAEEEPAAEKAEKAPAGKKPKAEKRLPAGKGEKGSGEGKKAGRKKGK) is disordered. Lys-7 and Lys-37 each carry N6-acetyllysine. Lys-149 is covalently cross-linked (Glycyl lysine isopeptide (Lys-Gly) (interchain with G-Cter in ubiquitin)).

Belongs to the histone H2B family. As to quaternary structure, the nucleosome is a histone octamer containing two molecules each of H2A, H2B, H3 and H4 assembled in one H3-H4 heterotetramer and two H2A-H2B heterodimers. The octamer wraps approximately 147 bp of DNA. In terms of processing, can be acetylated to form H2BK6ac and H2BK33ac. Monoubiquitinated by BRE1 to form H2BK143ub1 and deubiquitinated by UBP26. Required for heterochromatic histone H3 di- and trimethylation at H3K4me. May give a specific tag for epigenetic transcriptional activation.

It is found in the nucleus. The protein resides in the chromosome. In terms of biological role, core component of nucleosome. Nucleosomes wrap and compact DNA into chromatin, limiting DNA accessibility to the cellular machineries which require DNA as a template. Histones thereby play a central role in transcription regulation, DNA repair, DNA replication and chromosomal stability. DNA accessibility is regulated via a complex set of post-translational modifications of histones, also called histone code, and nucleosome remodeling. This chain is Histone H2B.6 (H2B.6), found in Oryza sativa subsp. japonica (Rice).